The chain runs to 198 residues: Recombination protein RecR (198 aa).

The C4-type zinc finger occupies cysteine 57 to cysteine 72. One can recognise a Toprim domain in the interval glutamate 80 to alanine 175.

It belongs to the RecR family.

In terms of biological role, may play a role in DNA repair. It seems to be involved in an RecBC-independent recombinational process of DNA repair. It may act with RecF and RecO. This is Recombination protein RecR from Streptococcus equi subsp. equi (strain 4047).